Here is a 508-residue protein sequence, read N- to C-terminus: Photosystem II CP47 reaction center protein (508 aa).

6 consecutive transmembrane segments (helical) span residues 21 to 36 (SVHI…WAGS), 101 to 115 (IVFS…IWHW), 140 to 156 (GIHL…FGAF), 203 to 218 (IAAG…FHLS), 237 to 252 (VLSS…AFVV), and 457 to 472 (TFAL…HGAR).

The protein belongs to the PsbB/PsbC family. PsbB subfamily. In terms of assembly, PSII is composed of 1 copy each of membrane proteins PsbA, PsbB, PsbC, PsbD, PsbE, PsbF, PsbH, PsbI, PsbJ, PsbK, PsbL, PsbM, PsbT, PsbX, PsbY, PsbZ, Psb30/Ycf12, at least 3 peripheral proteins of the oxygen-evolving complex and a large number of cofactors. It forms dimeric complexes. The cofactor is Binds multiple chlorophylls. PSII binds additional chlorophylls, carotenoids and specific lipids..

It is found in the plastid. The protein localises to the chloroplast thylakoid membrane. Its function is as follows. One of the components of the core complex of photosystem II (PSII). It binds chlorophyll and helps catalyze the primary light-induced photochemical processes of PSII. PSII is a light-driven water:plastoquinone oxidoreductase, using light energy to abstract electrons from H(2)O, generating O(2) and a proton gradient subsequently used for ATP formation. The sequence is that of Photosystem II CP47 reaction center protein from Drimys granadensis.